Here is a 405-residue protein sequence, read N- to C-terminus: LanC-like protein GCL2 (405 aa).

3 residues coordinate Zn(2+): Cys278, Cys323, and His324.

This sequence belongs to the LanC-like protein family.

Functionally, may play a role in signaling. May be not involved in abscisic acid (ABA) signaling. The protein is LanC-like protein GCL2 (GCL2) of Arabidopsis thaliana (Mouse-ear cress).